The following is a 393-amino-acid chain: NAD(P)H-quinone oxidoreductase subunit H, chloroplastic (393 aa).

It belongs to the complex I 49 kDa subunit family. In terms of assembly, NDH is composed of at least 16 different subunits, 5 of which are encoded in the nucleus.

The protein localises to the plastid. It localises to the chloroplast thylakoid membrane. The catalysed reaction is a plastoquinone + NADH + (n+1) H(+)(in) = a plastoquinol + NAD(+) + n H(+)(out). The enzyme catalyses a plastoquinone + NADPH + (n+1) H(+)(in) = a plastoquinol + NADP(+) + n H(+)(out). NDH shuttles electrons from NAD(P)H:plastoquinone, via FMN and iron-sulfur (Fe-S) centers, to quinones in the photosynthetic chain and possibly in a chloroplast respiratory chain. The immediate electron acceptor for the enzyme in this species is believed to be plastoquinone. Couples the redox reaction to proton translocation, and thus conserves the redox energy in a proton gradient. The polypeptide is NAD(P)H-quinone oxidoreductase subunit H, chloroplastic (Phaseolus vulgaris (Kidney bean)).